Consider the following 264-residue polypeptide: MVTMKDLLECGVHFGHQTRRWNPKTKKFIFGVRKNIHIIDLQKTLRYFRYTYNIVRDASAQGKSIMFVGTKKQANETLKEFAESIQVPYVNYRWLGGMLTNFSTIRKSVRKLEIIEEMENSGQIDLLTKKEKLMILRKKEKLDKYLGGVRHMKKIPDMIFVIDVAKEKIAVAEARKLHIPIVAPLDTNCDPDLVDYPIPGNDDAIRSIRLFCKEMSEAILEGRELMQEEIVHANENSEEIEYVSHEEKEEMLAEIQKEITQGAE.

Belongs to the universal ribosomal protein uS2 family.

This chain is Small ribosomal subunit protein uS2 (rpsB), found in Helicobacter pylori (strain ATCC 700392 / 26695) (Campylobacter pylori).